Here is a 194-residue protein sequence, read N- to C-terminus: Early growth response protein 1 (194 aa).

C2H2-type zinc fingers lie at residues 1–18 (CDRR…IRIH), 24–46 (FQCR…IRTH), and 52–74 (FACD…TKIH).

It belongs to the EGR C2H2-type zinc-finger protein family.

It is found in the nucleus. The protein localises to the cytoplasm. Functionally, transcriptional regulator. Recognizes and binds to the DNA sequence 5'-GCG(T/G)GGGCG-3'(EGR-site) in the promoter region of target genes. Binds double-stranded target DNA, irrespective of the cytosine methylation status. Regulates the transcription of numerous target genes, and thereby plays an important role in regulating the response to growth factors, DNA damage, and ischemia. Plays a role in the regulation of cell survival, proliferation and cell death. Mediates responses to ischemia and hypoxia; regulates the expression of proteins that are involved in inflammatory processes. Plays a role in regulating the expression of circadian clock genes. The sequence is that of Early growth response protein 1 (EGR1) from Gallus gallus (Chicken).